Consider the following 219-residue polypeptide: Thiamine-phosphate synthase (219 aa).

4-amino-2-methyl-5-(diphosphooxymethyl)pyrimidine is bound by residues 44–48 (QFREK) and N79. Mg(2+) is bound by residues D80 and D99. S117 is a 4-amino-2-methyl-5-(diphosphooxymethyl)pyrimidine binding site. A 2-[(2R,5Z)-2-carboxy-4-methylthiazol-5(2H)-ylidene]ethyl phosphate-binding site is contributed by 143–145 (TST). 4-amino-2-methyl-5-(diphosphooxymethyl)pyrimidine is bound at residue K146. 2-[(2R,5Z)-2-carboxy-4-methylthiazol-5(2H)-ylidene]ethyl phosphate contacts are provided by residues G175 and 195–196 (IS).

It belongs to the thiamine-phosphate synthase family. The cofactor is Mg(2+).

It carries out the reaction 2-[(2R,5Z)-2-carboxy-4-methylthiazol-5(2H)-ylidene]ethyl phosphate + 4-amino-2-methyl-5-(diphosphooxymethyl)pyrimidine + 2 H(+) = thiamine phosphate + CO2 + diphosphate. The catalysed reaction is 2-(2-carboxy-4-methylthiazol-5-yl)ethyl phosphate + 4-amino-2-methyl-5-(diphosphooxymethyl)pyrimidine + 2 H(+) = thiamine phosphate + CO2 + diphosphate. The enzyme catalyses 4-methyl-5-(2-phosphooxyethyl)-thiazole + 4-amino-2-methyl-5-(diphosphooxymethyl)pyrimidine + H(+) = thiamine phosphate + diphosphate. It functions in the pathway cofactor biosynthesis; thiamine diphosphate biosynthesis; thiamine phosphate from 4-amino-2-methyl-5-diphosphomethylpyrimidine and 4-methyl-5-(2-phosphoethyl)-thiazole: step 1/1. In terms of biological role, condenses 4-methyl-5-(beta-hydroxyethyl)thiazole monophosphate (THZ-P) and 2-methyl-4-amino-5-hydroxymethyl pyrimidine pyrophosphate (HMP-PP) to form thiamine monophosphate (TMP). This chain is Thiamine-phosphate synthase, found in Bacillus thuringiensis (strain Al Hakam).